Reading from the N-terminus, the 841-residue chain is Nuclear RNA export factor 2 (841 aa).

Residues 1–285 (MPNQMRVLDF…NFELVDGKPF (285 aa)) are RNA-binding unit probably involved in Piwi-dependent recruitment and single-stranded RNA-PPNP complex formation. 3 LRR repeats span residues 200–221 (RLNG…TLLA), 224–245 (DYAL…CRAL), and 249–270 (RARE…PANI). A necessary for silencing function region spans residues 286-553 (NMLHKIFSPL…EYVRAVKEVF (268 aa)). In terms of domain architecture, RRM spans 325–408 (WHAFMIPDPS…IFRYYLRMNV (84 aa)). LRR repeat units lie at residues 475–496 (TCSE…HVLG), 500–521 (CLRA…HSLG), and 524–545 (PLKS…PSEY). The 174-residue stretch at 585–758 (LVGAFLENYL…LKIANERLHI (174 aa)) folds into the NTF2 domain. The TAP-C domain maps to 788-841 (DVKDHKLLLFQEVTGLISTWVTSIVEEADWDFERALKLFIQKNADHEIPDLAFA).

Belongs to the NXF family. In terms of assembly, in the ovaries, part of a complex composed of at least Panx, nxf2, piwi and Nxt1. The complex is knowns as Panx-induced cotranscriptional silencing (PICTS) complex, Panx-nxf2-dependent TAP/p15 silencing (Pandas complex), SFiNX (silencing factor interacting nuclear export variant) or piwi-Panx-nxf2-p15 (PPNP) complex. Interacts (via TAP-C domain) with Panx (via NIR region); the interaction is direct. Interacts (via NTF2 domain) with Nxt1; the interaction is direct and prevents Nxt1 binding to nucleoporins. Interacts with sbr/Nxf1. In terms of tissue distribution, expressed in female gonads (at protein level). Expressed ubiquitously.

It is found in the cytoplasm. Its subcellular location is the nucleus. The protein localises to the nucleoplasm. Functionally, may be involved in the export of mRNA from the nucleus to the cytoplasm. In the ovaries, forms a complex with nxf2, piwi and Nxt1 which acts as effectors of cotranscriptional transposon silencing. On recruitment to a target transcript, interacts with single stranded RNA, thereby anchoring the complex via the nascent target transcript to chromatin and allowing Panx to recruit silencing effectors to establishing repressive heterochromatin at transposon loci. Does not affect piRNA biogenesis. The interaction with Panx stabilizes the nuclear protein complex. Does not bind nucleoporins, but regulates sbr/Nxf1 binding to nucleoporins and, indirectly, transposon exports. The polypeptide is Nuclear RNA export factor 2 (nxf2) (Drosophila melanogaster (Fruit fly)).